The chain runs to 143 residues: Anti-sigma F factor (143 aa).

It belongs to the anti-sigma-factor family.

It catalyses the reaction L-seryl-[protein] + ATP = O-phospho-L-seryl-[protein] + ADP + H(+). It carries out the reaction L-threonyl-[protein] + ATP = O-phospho-L-threonyl-[protein] + ADP + H(+). Functionally, binds to sigma F and blocks its ability to form an RNA polymerase holoenzyme (E-sigma F). Phosphorylates SpoIIAA on a serine residue. This phosphorylation may enable SpoIIAA to act as an anti-anti-sigma factor that counteracts SpoIIAB and thus releases sigma F from inhibition. The chain is Anti-sigma F factor from Clostridium botulinum (strain Alaska E43 / Type E3).